Reading from the N-terminus, the 150-residue chain is Endoribonuclease YbeY (150 aa).

Zn(2+) is bound by residues histidine 102, histidine 106, and histidine 112.

It belongs to the endoribonuclease YbeY family. The cofactor is Zn(2+).

It localises to the cytoplasm. In terms of biological role, single strand-specific metallo-endoribonuclease involved in late-stage 70S ribosome quality control and in maturation of the 3' terminus of the 16S rRNA. The chain is Endoribonuclease YbeY from Thermotoga petrophila (strain ATCC BAA-488 / DSM 13995 / JCM 10881 / RKU-1).